The primary structure comprises 508 residues: MVHADGHNFPGSDPNPHMNKFAFGCAIVASIISIIFGYDTGVMSGAQIFIRDDLKINDTQIEVLAGILNLCALVGSLTAGKTSDVIGRRYTIALSAVIFLVGSVLMGYGPNYPVLMVGRCIAGVGVGFALMIAPVYSAEISSASHRGFLTSLPELCISLGILLGYVSNYCFGKLTLKLGWRLMLGIAAFPSLILAFGITRMPESPRWLVMQGRLEEAKKIMVLVSNTEEEAEERFRDILTAAEVDVTEIKEVGGGVKKKNHGKSVWRELVIKPRPAVRLILIAAVGIHFFEHATGIEAVVLYSPRIFKKAGVVSKDKLLLATVGVGLTKAFFIIIATFLLDKVGRRKLLLTSTGGMVFALTSLAVSLTMVQRFGRLAWALSLSIVSTYAFVAFFSIGLGPITWVYSSEIFPLRLRAQGASIGVAVNRIMNATVSMSFLSMTKAITTGGVFFVFAGIAVAAWWFFFFMLPETKGLPLEEMEKLFGGGGPRGDRDGLEIQTKTISIGGFS.

A run of 12 helical transmembrane segments spans residues 21-41, 60-80, 90-110, 120-140, 147-167, 178-198, 280-300, 318-338, 348-368, 384-404, 418-438, and 448-468; these read FAFG…YDTG, QIEV…LTAG, YTIA…GYGP, CIAG…SAEI, GFLT…GYVS, LGWR…AFGI, ILIA…EAVV, LLLA…IATF, LLLT…VSLT, IVST…ITWV, GASI…MSFL, and GVFF…FFML.

The protein belongs to the major facilitator superfamily. Sugar transporter (TC 2.A.1.1) family.

The protein localises to the membrane. Its function is as follows. Plasma membrane sugar-proton symporter. The chain is Probable polyol transporter 3 (PLT3) from Arabidopsis thaliana (Mouse-ear cress).